An 89-amino-acid chain; its full sequence is N.vectensis toxin 7 (89 aa).

Residues 1 to 21 (MASFFKIAVICLVMLVVCSNA) form the signal peptide. Disulfide bonds link C44–C77, C46–C69, and C62–C78.

As to expression, expressed in ectodermal gland cells.

In terms of biological role, probable toxin. In Nematostella vectensis (Starlet sea anemone), this protein is N.vectensis toxin 7.